Consider the following 377-residue polypeptide: S-adenosylmethionine synthase (377 aa).

Position 14 (histidine 14) interacts with ATP. Aspartate 16 lines the Mg(2+) pocket. Residue glutamate 42 coordinates K(+). Glutamine 98 contacts L-methionine. The flexible loop stretch occupies residues 98–108 (QSADIALGIDL). Residues 162–164 (DMK), 228–229 (RF), aspartate 237, 243–244 (RK), alanine 260, and lysine 264 contribute to the ATP site. Aspartate 237 is a binding site for L-methionine. An L-methionine-binding site is contributed by lysine 268.

Belongs to the AdoMet synthase family. In terms of assembly, homotetramer; dimer of dimers. The cofactor is Mg(2+). Requires K(+) as cofactor.

The protein localises to the cytoplasm. The catalysed reaction is L-methionine + ATP + H2O = S-adenosyl-L-methionine + phosphate + diphosphate. Its pathway is amino-acid biosynthesis; S-adenosyl-L-methionine biosynthesis; S-adenosyl-L-methionine from L-methionine: step 1/1. Its function is as follows. Catalyzes the formation of S-adenosylmethionine (AdoMet) from methionine and ATP. The overall synthetic reaction is composed of two sequential steps, AdoMet formation and the subsequent tripolyphosphate hydrolysis which occurs prior to release of AdoMet from the enzyme. This chain is S-adenosylmethionine synthase, found in Mesoplasma florum (strain ATCC 33453 / NBRC 100688 / NCTC 11704 / L1) (Acholeplasma florum).